Reading from the N-terminus, the 1198-residue chain is Spindle-defective protein 5 (1198 aa).

Positions 1–10 (MEDNSVLNED) are enriched in polar residues. Residues 1–45 (MEDNSVLNEDSNLEHVEGQPRRSMSQPVLNVEGDKRTSSTSATQQ) are disordered. 5 coiled-coil regions span residues 67-381 (EENK…QLTG), 566-603 (HDVAVNVEQMQEKMSQIREALARLFERLKSSAALFEEI), 694-916 (KFTS…LSTS), 983-1035 (DELC…ENVP), and 1127-1175 (KNET…EFQD).

The protein localises to the cytoplasm. It is found in the cytoskeleton. The protein resides in the microtubule organizing center. Its subcellular location is the centrosome. In terms of biological role, plays a central role in centrosome maturation and mitotic spindle assembly during the first division of the zygote. Required for the centrosomal localization of air-1 and zyg-9. Probably not required in late embryogenesis and during larval development. This Caenorhabditis elegans protein is Spindle-defective protein 5 (spd-5).